Here is a 412-residue protein sequence, read N- to C-terminus: Isocitrate dehydrogenase [NADP] (412 aa).

Thr100 is an NADP(+) binding site. The D-threo-isocitrate site is built by Ser109, Asn111, Arg115, Arg125, and Arg149. Asp301 lines the Mg(2+) pocket. NADP(+)-binding positions include 333–339 (HGSAPKY), Asn346, Tyr385, and Arg389.

It belongs to the isocitrate and isopropylmalate dehydrogenases family. In terms of assembly, homodimer. It depends on Mg(2+) as a cofactor. Mn(2+) is required as a cofactor.

It catalyses the reaction D-threo-isocitrate + NADP(+) = 2-oxoglutarate + CO2 + NADPH. Its function is as follows. Catalyzes the oxidative decarboxylation of isocitrate to 2-oxoglutarate and carbon dioxide with the concomitant reduction of NADP(+). NAD(+) can replace NADP(+) with low efficiency. In Archaeoglobus fulgidus (strain ATCC 49558 / DSM 4304 / JCM 9628 / NBRC 100126 / VC-16), this protein is Isocitrate dehydrogenase [NADP].